A 957-amino-acid chain; its full sequence is Sorting nexin-13 (957 aa).

A PXA domain is found at Ala97–Asn284. The RGS domain maps to Pro373–Arg511. The PX domain occupies Val559–Lys680. A 1,2-diacyl-sn-glycero-3-phospho-(1D-myo-inositol-3-phosphate) contacts are provided by Arg601, Ser603, Lys628, and Arg642.

Belongs to the sorting nexin family.

The protein localises to the early endosome membrane. Its function is as follows. May be involved in several stages of intracellular trafficking. Acts as a GAP for Galphas. May play a role in endosome homeostasis. The polypeptide is Sorting nexin-13 (Snx13) (Mus musculus (Mouse)).